Here is a 122-residue protein sequence, read N- to C-terminus: Large ribosomal subunit protein uL14 (122 aa).

The protein belongs to the universal ribosomal protein uL14 family. As to quaternary structure, part of the 50S ribosomal subunit. Forms a cluster with proteins L3 and L19. In the 70S ribosome, L14 and L19 interact and together make contacts with the 16S rRNA in bridges B5 and B8.

Functionally, binds to 23S rRNA. Forms part of two intersubunit bridges in the 70S ribosome. This Chlamydia muridarum (strain MoPn / Nigg) protein is Large ribosomal subunit protein uL14.